The following is a 155-amino-acid chain: 6,7-dimethyl-8-ribityllumazine synthase (155 aa).

Residues F23, 57-59, and 81-83 contribute to the 5-amino-6-(D-ribitylamino)uracil site; these read AFE and AVI. 86-87 contacts (2S)-2-hydroxy-3-oxobutyl phosphate; sequence AT. The Proton donor role is filled by H89. F114 provides a ligand contact to 5-amino-6-(D-ribitylamino)uracil. R128 is a (2S)-2-hydroxy-3-oxobutyl phosphate binding site.

This sequence belongs to the DMRL synthase family.

The catalysed reaction is (2S)-2-hydroxy-3-oxobutyl phosphate + 5-amino-6-(D-ribitylamino)uracil = 6,7-dimethyl-8-(1-D-ribityl)lumazine + phosphate + 2 H2O + H(+). Its pathway is cofactor biosynthesis; riboflavin biosynthesis; riboflavin from 2-hydroxy-3-oxobutyl phosphate and 5-amino-6-(D-ribitylamino)uracil: step 1/2. In terms of biological role, catalyzes the formation of 6,7-dimethyl-8-ribityllumazine by condensation of 5-amino-6-(D-ribitylamino)uracil with 3,4-dihydroxy-2-butanone 4-phosphate. This is the penultimate step in the biosynthesis of riboflavin. This is 6,7-dimethyl-8-ribityllumazine synthase from Pelotomaculum thermopropionicum (strain DSM 13744 / JCM 10971 / SI).